A 407-amino-acid chain; its full sequence is Betaine--homocysteine S-methyltransferase 1 (407 aa).

The 304-residue stretch at 11-314 (KGILERLNAG…YHIRAIAEEL (304 aa)) folds into the Hcy-binding domain. Residues K40, K93, and K98 each carry the N6-succinyllysine modification. Residue C217 coordinates Zn(2+). K232 and K241 each carry N6-succinyllysine. Zn(2+)-binding residues include C299 and C300. At S330 the chain carries Phosphoserine. 2 positions are modified to N6-succinyllysine: K340 and K377.

As to quaternary structure, homotetramer. Requires Zn(2+) as cofactor.

It is found in the cytoplasm. Its subcellular location is the cytosol. The protein localises to the nucleus. It carries out the reaction L-homocysteine + glycine betaine = N,N-dimethylglycine + L-methionine. The protein operates within amine and polyamine degradation; betaine degradation; sarcosine from betaine: step 1/2. It participates in amino-acid biosynthesis; L-methionine biosynthesis via de novo pathway; L-methionine from L-homocysteine (BhmT route): step 1/1. Involved in the regulation of homocysteine metabolism. Converts betaine and homocysteine to dimethylglycine and methionine, respectively. This reaction is also required for the irreversible oxidation of choline. This is Betaine--homocysteine S-methyltransferase 1 (Bhmt) from Mus musculus (Mouse).